Reading from the N-terminus, the 558-residue chain is ATP-dependent RNA helicase ROK1 (558 aa).

The interval 26–91 (PSAKQQQYEQ…EEAPPLEIQT (66 aa)) is disordered. 2 stretches are compositionally biased toward basic and acidic residues: residues 34-53 (EQHK…DFFH) and 64-81 (DSTD…KKED). The Q motif motif lies at 120–148 (DMIGRFRLDSKLLSNLLEAEFVEPTAIQC). The 179-residue stretch at 151 to 329 (LPISLSGRDL…HSIMRDPIRV (179 aa)) folds into the Helicase ATP-binding domain. 164 to 171 (APTGSGKT) lines the ATP pocket. The DEAD box motif lies at 276-279 (DEAD). The Helicase C-terminal domain maps to 340–504 (TIDQKLVFTG…GFSGWMENMT (165 aa)). Residues 509 to 558 (NEKKKVKHKEIDRKDISTVPKLVKHKRKQREQMIEASKKRKQEETRNALQ) are disordered. Over residues 538–558 (REQMIEASKKRKQEETRNALQ) the composition is skewed to basic and acidic residues.

It belongs to the DEAD box helicase family. DDX52/ROK1 subfamily. Interacts with the U3 snoRNA and is associated with the 90S and 40S pre-ribosomes.

It localises to the nucleus. Its subcellular location is the nucleolus. The catalysed reaction is ATP + H2O = ADP + phosphate + H(+). Functionally, ATP-dependent RNA helicase involved in 40S ribosomal subunit biogenesis. Required for the processing and cleavage of 35S pre-rRNA at sites A0, A1, and A2, leading to mature 18S rRNA. This chain is ATP-dependent RNA helicase ROK1 (ROK1), found in Scheffersomyces stipitis (strain ATCC 58785 / CBS 6054 / NBRC 10063 / NRRL Y-11545) (Yeast).